We begin with the raw amino-acid sequence, 308 residues long: Porphobilinogen deaminase (308 aa).

S-(dipyrrolylmethanemethyl)cysteine is present on Cys-243.

The protein belongs to the HMBS family. Monomer. Dipyrromethane is required as a cofactor.

The enzyme catalyses 4 porphobilinogen + H2O = hydroxymethylbilane + 4 NH4(+). It functions in the pathway porphyrin-containing compound metabolism; protoporphyrin-IX biosynthesis; coproporphyrinogen-III from 5-aminolevulinate: step 2/4. In terms of biological role, tetrapolymerization of the monopyrrole PBG into the hydroxymethylbilane pre-uroporphyrinogen in several discrete steps. The polypeptide is Porphobilinogen deaminase (Mesorhizobium japonicum (strain LMG 29417 / CECT 9101 / MAFF 303099) (Mesorhizobium loti (strain MAFF 303099))).